The sequence spans 152 residues: Ribosome maturation factor RimP (152 aa).

It belongs to the RimP family.

It localises to the cytoplasm. In terms of biological role, required for maturation of 30S ribosomal subunits. This Burkholderia ambifaria (strain MC40-6) protein is Ribosome maturation factor RimP.